A 266-amino-acid chain; its full sequence is Energy-coupling factor transporter transmembrane protein EcfT (266 aa).

A run of 7 helical transmembrane segments spans residues 26–46 (VIAT…RSVT), 47–67 (LAGL…HYIL), 69–89 (GIKP…LSTP), 116–136 (LIWL…IALT), 151–171 (LPVH…PTLI), 192–212 (SLVA…LSAF), and 246–266 (YAVT…KKAL).

The protein belongs to the energy-coupling factor EcfT family. Forms a stable energy-coupling factor (ECF) transporter complex composed of 2 membrane-embedded substrate-binding proteins (S component), 2 ATP-binding proteins (A component) and 2 transmembrane proteins (T component). May be able to interact with more than 1 S component at a time.

The protein localises to the cell membrane. Its function is as follows. Transmembrane (T) component of an energy-coupling factor (ECF) ABC-transporter complex. Unlike classic ABC transporters this ECF transporter provides the energy necessary to transport a number of different substrates. In Heliobacterium modesticaldum (strain ATCC 51547 / Ice1), this protein is Energy-coupling factor transporter transmembrane protein EcfT.